The following is a 127-amino-acid chain: Histidine-containing phosphotransfer protein 4 (127 aa).

One can recognise an HPt domain in the interval 27 to 122 (NPNFVEEVSA…STLRKKLEHY (96 aa)). Histidine 68 is modified (phosphohistidine).

Interacts with the B-type response regulators ARR1 and ARR2. Post-translationally, two-component system major event consists of a His-to-Asp phosphorelay between a sensor histidine kinase (HK) and a response regulator (RR). In plants, the His-to-Asp phosphorelay involves an additional intermediate named Histidine-containing phosphotransfer protein (HPt). This multistep phosphorelay consists of a His-Asp-His-Asp sequential transfer of a phosphate group between first a His and an Asp of the HK protein, followed by the transfer to a conserved His of the HPt protein and finally the transfer to an Asp in the receiver domain of the RR protein. In terms of tissue distribution, predominantly expressed in aerial parts of the plant.

The protein localises to the cytoplasm. The protein resides in the cytosol. It is found in the nucleus. Its function is as follows. Functions as a two-component phosphorelay mediator between cytokinin sensor histidine kinases and response regulators (B-type ARRs). Plays an important role in propagating cytokinin signal transduction through the multistep His-to-Asp phosphorelay. This chain is Histidine-containing phosphotransfer protein 4 (AHP4), found in Arabidopsis thaliana (Mouse-ear cress).